The sequence spans 273 residues: Fos-related antigen 1 (273 aa).

Disordered regions lie at residues 1–46 and 60–114; these read MYRD…IDSS and GPTG…RRER. Low complexity predominate over residues 7 to 35; that stretch reads EPGPSSGAGSPYGRPAQPPQAQAQTAQQQ. Residues 105–168 form the bZIP domain; it reads EERRRVRRER…ERLELVLEAH (64 aa). A basic motif region spans residues 107-127; it reads RRRVRRERNKLAAAKCRNRRK. Positions 133-161 are leucine-zipper; the sequence is LQAETDKLEDEKSGLQREIEELQKQKERL. The segment covering 169 to 182 has biased composition (basic and acidic residues); that stretch reads RPICKIPEGDKKDP. Positions 169–273 are disordered; it reads RPICKIPEGD…PLGSPTLLAL (105 aa). 2 stretches are compositionally biased toward low complexity: residues 217–235 and 254–273; these read LHTP…TPSL and SSSS…LLAL. The residue at position 267 (Ser-267) is a Phosphoserine.

It belongs to the bZIP family. Fos subfamily. In terms of assembly, heterodimer. Interacts with the BAF multiprotein chromatin-remodeling complex subunits SMARCB1 and SMARCD1. Interacts with ARID1A and JUN.

The protein resides in the nucleus. The protein is Fos-related antigen 1 (Fosl1) of Mus musculus (Mouse).